A 1398-amino-acid chain; its full sequence is MDWLLATPQLYSAFSSLGCLEGDTYVVNPNALAILEEINYKLTYEDQTLRTFRRAIGFGQNVRSDLIPLLENAKDDAVLESVIRILVNLTVPVECLFSVDVMYRTDVGRHTIFELNKLLYTSKEAFTEARSTKSVVEYMKHILESDPKLSPHKCDQINNCLLLLRNILHIPETHAHCVMPMMQSMPHGISMQNTILWNLFIQSIDKLLLYLMTCPQRAFWGVTMVQLIALIYKDQHVSTLQKLLSLWFEASLSESSEDNESNTSPPKQGSGDSSPMLTSDPTSDSSDNGSNGRGMGGGMREGTAATLQEVSRKGQEYQNAMARVPADKPDGSEEASDMTGNDSEQPGSPEQSQPAGESMDDGDYEDQRHRQLNEHGEEDEDEDEVEEEEYLQLGPASEPLNLTQQPADKVNNTTNPTSSAPQGCLGNEPFKPPPPLPVRASTSAHAQMQKFNESSYASHVSAVKLGQKSPHAGQLQLTKGKCCPQKRECPSSQSELSDCGYGTQVENQESISTSSNDDDGPQGKPQHQKPPCNTKPRNKPRTIMSPMDKKELRRKKLVKRSKSSLINMKGLVQHTPTDDDISNLLKEFTVDFLLKGYSYLVEELHMQLLSNAKVPIDTSHFFWLVTYFLKFAAQLELDMEHIDTILTYDVLSYLTYEGVSLCEQLELNARQEGSDLKPYLRRMHLVVTAIREFLQAIDTYNKVTHLNEDDKAHLRQLQLQISEMSDLRCLFVLLLRRFNPSIHSKQYLQDLVVTNHILLLILDSSAKLGGCQTIRLSEHITQFATLEVMHYYGILLEDFNNNGEFVNDCIFTMMHHIGGDLGQIGVLFQPIILKTYSRIWEADYELCDDWSDLIEYVIHKFMNTPPKSPLTIPTTSLTEMTKEHNQEHTVCSWSQEEMDTLYWYYVQSKKNNDIVGKIVKLFSNNGNKLKTRISIIQQLLQQDIITLLEYDDLMKFEDAEYQRTLLTTPTSATTESGIEIKECAYGKPSDDVQILLDLIIKENKAQHLLWLQRILIECCFVKLTLRSGLKVPEGDHIMEPVAYHCICKQKSIPVVQWNNEQSTTMLYQPFVLLLHKLGIQLPADAGSIFARIPDYWTPETMYGLAKKLGPLDKLNLKFDASELEDATASSPSRYHHTGPRNSLSSVSSLDVDLGDTEELALIPEVDAAVEKAHAMASTPSPSEIFAVPKTKHCNSIIRYTPDPTPPVPNWLQLVMRSKCNHRTGPSGDPSDCIGSSSTTVDDEGFGKSISAATSQAASTSMSTVNPTTTLSLNMLNTFMGSHNENSSSSGCGGTVSSLSMVALMSTGAAGGGGNTSGLEMDVDASMKSSFERLEVNGSHFSRANNLDQEYSAMVASVYEKEKELNSDNVSLASDLTRMYVSDEDDRLERTEIRVPHYH.

Residues 237–268 (VSTLQKLLSLWFEASLSESSEDNESNTSPPKQ) form a necessary for normal circadian rhythm region. Disordered stretches follow at residues 254 to 300 (ESSE…GGMR), 322 to 452 (ARVP…QKFN), 478 to 555 (TKGK…LRRK), 1127 to 1147 (TASS…SSVS), and 1220 to 1239 (NHRT…SSTT). The span at 273–290 (SSPMLTSDPTSDSSDNGS) shows a compositional bias: low complexity. A compositionally biased stretch (gly residues) spans 291–300 (NGRGMGGGMR). The segment covering 338-355 (MTGNDSEQPGSPEQSQPA) has biased composition (polar residues). The segment covering 365-375 (EDQRHRQLNEH) has biased composition (basic and acidic residues). A compositionally biased stretch (acidic residues) spans 376 to 390 (GEEDEDEDEVEEEEY). Polar residues-rich tracts occupy residues 400 to 421 (LNLT…SSAP), 440 to 452 (ASTS…QKFN), and 504 to 515 (QVENQESISTSS). Low complexity predominate over residues 522-531 (QGKPQHQKPP). The Nuclear localization signal signature appears at 550 to 560 (KELRRKKLVKR).

The protein belongs to the timeless family. Forms a heterodimer with period (PER); the complex then translocates into the nucleus. In terms of processing, phosphorylated with a circadian rhythmicity. Expressed in head, photoreceptors, lateral neurons and glial cells in the lamina and medulla of the optic lobes. Expression follows a light-dark cycle, levels show a significant decrease at the end of the night and then remain low throughout the light period (at protein level).

It is found in the nucleus. It localises to the cytoplasm. Its subcellular location is the perinuclear region. Functionally, required for the production of circadian rhythms. The biological cycle depends on the rhythmic formation and nuclear localization of the TIM-PER complex. Light induces the degradation of TIM, which promotes elimination of PER. Nuclear activity of the heterodimer coordinatively regulates PER and TIM transcription through a negative feedback loop. Behaves as a negative element in circadian transcriptional loop. Does not appear to bind DNA, suggesting indirect transcriptional inhibition. This chain is Protein timeless (tim), found in Drosophila melanogaster (Fruit fly).